The sequence spans 339 residues: Uroporphyrinogen decarboxylase (339 aa).

Substrate contacts are provided by residues 21 to 25, F40, D71, Y147, S202, and H315; that span reads RQAGR.

Belongs to the uroporphyrinogen decarboxylase family. Homodimer.

It is found in the cytoplasm. The catalysed reaction is uroporphyrinogen III + 4 H(+) = coproporphyrinogen III + 4 CO2. It participates in porphyrin-containing compound metabolism; protoporphyrin-IX biosynthesis; coproporphyrinogen-III from 5-aminolevulinate: step 4/4. Its function is as follows. Catalyzes the decarboxylation of four acetate groups of uroporphyrinogen-III to yield coproporphyrinogen-III. The protein is Uroporphyrinogen decarboxylase of Helicobacter pylori (strain ATCC 700392 / 26695) (Campylobacter pylori).